The following is a 234-amino-acid chain: Kappa-casein (234 aa).

The signal sequence occupies residues 1–21 (MMKSFLLVVNIVALTLPFLAA). Tandem repeats lie at residues 127-153 (LGKA…QPTV), 154-179 (SAGD…EEAR), and 180-207 (ESPE…PRES). The tract at residues 127 to 207 (LGKATILSTD…AVPSEEPRES (81 aa)) is 3 X 27 AA tandem repeats. Residues 143–234 (QTPVSAAQPT…STGPAIASMA (92 aa)) form a disordered region. Thr-144 carries an O-linked (GalNAc...) threonine glycan. Polar residues predominate over residues 144–171 (TPVSAAQPTVSAGDTPEVSSQFIDTPDT). Position 158 is a phosphothreonine (Thr-158). A Phosphoserine; alternate modification is found at Ser-162. Ser-162 carries an O-linked (GalNAc...) serine; alternate glycan.

It belongs to the kappa-casein family. In terms of tissue distribution, mammary gland specific. Secreted in milk.

The protein resides in the secreted. In terms of biological role, kappa-casein stabilizes micelle formation, preventing casein precipitation in milk. In Cavia porcellus (Guinea pig), this protein is Kappa-casein (CSN3).